The following is a 1194-amino-acid chain: Multidrug efflux ATP-binding/permease protein BCG_0231 (1194 aa).

6 helical membrane passes run Leu-20 to Val-40, Leu-56 to Val-76, Leu-130 to Val-150, Trp-153 to Ala-173, Phe-258 to Phe-278, and Trp-279 to Ala-299. In terms of domain architecture, ABC transmembrane type-1 1 spans Leu-21 to Gln-301. Positions Leu-334–Pro-568 constitute an ABC transporter 1 domain. Residue Gly-367–Ser-374 participates in ATP binding. 6 helical membrane-spanning segments follow: residues Ala-628–Ile-648, Val-660–Val-680, Leu-743–Ile-763, Ala-765–Phe-785, Leu-847–Leu-867, and Val-878–Ile-898. The ABC transmembrane type-1 2 domain occupies Ala-628–Arg-910. Positions Val-942–Ala-1177 constitute an ABC transporter 2 domain. Position 976-983 (Gly-976–Ser-983) interacts with ATP.

The protein belongs to the ABC transporter superfamily. Lipid exporter (TC 3.A.1.106) family.

Its subcellular location is the cell inner membrane. In terms of biological role, overexpression increases resistance to chloramphenicol, ampicillin, streptomycin, tetracyclin and vancomycin. In Mycobacterium bovis (strain BCG / Pasteur 1173P2), this protein is Multidrug efflux ATP-binding/permease protein BCG_0231.